We begin with the raw amino-acid sequence, 233 residues long: Large ribosomal subunit protein uL22m (233 aa).

This sequence belongs to the universal ribosomal protein uL22 family. As to quaternary structure, component of the mitochondrial ribosome large subunit (39S) which comprises a 16S rRNA and about 50 distinct proteins.

It localises to the mitochondrion. This Drosophila pseudoobscura pseudoobscura (Fruit fly) protein is Large ribosomal subunit protein uL22m (mRpL22).